We begin with the raw amino-acid sequence, 529 residues long: L-ornithine N(5)-monooxygenase (529 aa).

Residues 100–108 and glutamine 119 contribute to the FAD site; that span reads EKQPQFAWH. Lysine 124 contacts substrate. Valine 185 is an FAD binding site. 270–273 contributes to the NADP(+) binding site; the sequence is NGQS. Residues 309-312 and asparagine 339 each bind substrate; that span reads NEIF. 339 to 341 lines the NADP(+) pocket; the sequence is NYG. 493–495 contacts FAD; the sequence is TLL. Serine 496 contributes to the substrate binding site.

The protein belongs to the lysine N(6)-hydroxylase/L-ornithine N(5)-oxygenase family. As to quaternary structure, homotetramer. FAD is required as a cofactor.

The catalysed reaction is L-ornithine + NADPH + O2 = N(5)-hydroxy-L-ornithine + NADP(+) + H2O. It catalyses the reaction L-ornithine + NADH + O2 = N(5)-hydroxy-L-ornithine + NAD(+) + H2O. Its pathway is siderophore biosynthesis. L-ornithine N(5)-monooxygenase; part of the gene cluster that mediates the biosynthesis of hydroxamate-containing siderophores that play a critical role in virulence. Cochliobolus heterostrophus produces extracellular coprogen-type siderophores including coprogen, neocoprogen I and neocoprogen II, as well as the intracellular siderophore ferricrocin. The role of extracellular siderophores is to supply iron to their producers in planta and the intracellular ferricrocin is required for intracellular iron distribution and storage with a crucial role in ascus and ascospore development. SIDA2 catalyzes the conversion of L-ornithine to N(5)-hydroxyornithine, the first step in the biosynthesis of all hydroxamate-containing siderophores. The assembly of extracellular coprogen-type siderophores is then performed by the nonribosomal peptide synthetase (NRPS) NPS6 whereas the intracellular siderophore ferricrocin is assembled by NPS2. The protein is L-ornithine N(5)-monooxygenase of Cochliobolus heterostrophus (strain C4 / ATCC 48331 / race T) (Southern corn leaf blight fungus).